Reading from the N-terminus, the 332-residue chain is tRNA uridine(34) hydroxylase (332 aa).

Residues 127 to 221 enclose the Rhodanese domain; sequence SDPETVLIDT…YLEEVPKEKS (95 aa). Cysteine 181 functions as the Cysteine persulfide intermediate in the catalytic mechanism. Residues 308–332 are disordered; that stretch reads AKKLAQLNKQKKQQAKEAARKKAQQ. The span at 321–332 shows a compositional bias: basic and acidic residues; that stretch reads QAKEAARKKAQQ.

The protein belongs to the TrhO family.

It catalyses the reaction uridine(34) in tRNA + AH2 + O2 = 5-hydroxyuridine(34) in tRNA + A + H2O. In terms of biological role, catalyzes oxygen-dependent 5-hydroxyuridine (ho5U) modification at position 34 in tRNAs. This is tRNA uridine(34) hydroxylase from Francisella tularensis subsp. tularensis (strain FSC 198).